A 152-amino-acid polypeptide reads, in one-letter code: Aspartate carbamoyltransferase regulatory chain (152 aa).

Zn(2+) contacts are provided by Cys-107, Cys-112, Cys-136, and Cys-139.

The protein belongs to the PyrI family. As to quaternary structure, contains catalytic and regulatory chains. The cofactor is Zn(2+).

Functionally, involved in allosteric regulation of aspartate carbamoyltransferase. This is Aspartate carbamoyltransferase regulatory chain from Chromobacterium violaceum (strain ATCC 12472 / DSM 30191 / JCM 1249 / CCUG 213 / NBRC 12614 / NCIMB 9131 / NCTC 9757 / MK).